Consider the following 508-residue polypeptide: Photosystem II CP47 reaction center protein (508 aa).

6 helical membrane passes run 21–36, 101–115, 140–156, 203–218, 237–252, and 457–472; these read AVHLMHTALVSGWAGS, IVLSGLLFLAAIWHW, GIHLFLSGVLCFGFGAF, IAAGILGILAGLFHLS, VLSSSIAAVFFAAFVV, and TFALLFFFGHIWHGAR.

Belongs to the PsbB/PsbC family. PsbB subfamily. In terms of assembly, PSII is composed of 1 copy each of membrane proteins PsbA, PsbB, PsbC, PsbD, PsbE, PsbF, PsbH, PsbI, PsbJ, PsbK, PsbL, PsbM, PsbT, PsbX, PsbY, PsbZ, Psb30/Ycf12, at least 3 peripheral proteins of the oxygen-evolving complex and a large number of cofactors. It forms dimeric complexes. Binds multiple chlorophylls. PSII binds additional chlorophylls, carotenoids and specific lipids. serves as cofactor.

Its subcellular location is the plastid. It is found in the chloroplast thylakoid membrane. Its function is as follows. One of the components of the core complex of photosystem II (PSII). It binds chlorophyll and helps catalyze the primary light-induced photochemical processes of PSII. PSII is a light-driven water:plastoquinone oxidoreductase, using light energy to abstract electrons from H(2)O, generating O(2) and a proton gradient subsequently used for ATP formation. In Anthoceros angustus (Hornwort), this protein is Photosystem II CP47 reaction center protein.